The primary structure comprises 233 residues: Transmembrane protein 40 (233 aa).

Met1 carries the N-acetylmethionine modification. The span at 1–14 (METSASSSQPQDNS) shows a compositional bias: polar residues. Residues 1–143 (METSASSSQP…RRGSDPASGE (143 aa)) form a disordered region. The segment covering 50–70 (SSSSSSSSSSSSSSSSSSSSS) has biased composition (low complexity). Residues 93–104 (YPHGNGSPGPGH) show a composition bias toward gly residues. Basic and acidic residues predominate over residues 105–114 (GEPDVLKDEL). Residue Ser137 is modified to Phosphoserine. 2 consecutive transmembrane segments (helical) span residues 160-180 (FFHF…YHYY) and 187-207 (LGVG…FGLV).

The protein resides in the membrane. This is Transmembrane protein 40 (TMEM40) from Homo sapiens (Human).